Consider the following 245-residue polypeptide: Tetraspanin-16 (245 aa).

Over 1–13 (MAEIHTPYSSLKK) the chain is Cytoplasmic. Residues 14–34 (LLSLLNGFVAVSGIILVGLGI) traverse the membrane as a helical segment. Topologically, residues 35–37 (GGK) are extracellular. Residues 38 to 58 (CGGASLTNVLGLSSAYLLHVG) form a helical membrane-spanning segment. Asn59 is a topological domain (cytoplasmic). A helical transmembrane segment spans residues 60 to 80 (LCLVMGCITVLLGCAGWYGAT). Over 81 to 94 (KESRGTLLFCILSM) the chain is Extracellular. The helical transmembrane segment at 95-115 (VIVLIMEVTAATVVLLFFPIV) threads the bilayer. The Cytoplasmic portion of the chain corresponds to 116–245 (GDVALEHTFV…VAQAGLELLA (130 aa)).

It belongs to the tetraspanin (TM4SF) family. As to expression, broadly expressed in most human tissues and cell lines including neural and bone marrow derived tissues.

The protein localises to the membrane. The protein is Tetraspanin-16 (TSPAN16) of Homo sapiens (Human).